The primary structure comprises 474 residues: Glycogen synthase (474 aa).

Position 15 (Lys-15) interacts with ADP-alpha-D-glucose.

Belongs to the glycosyltransferase 1 family. Bacterial/plant glycogen synthase subfamily.

The enzyme catalyses [(1-&gt;4)-alpha-D-glucosyl](n) + ADP-alpha-D-glucose = [(1-&gt;4)-alpha-D-glucosyl](n+1) + ADP + H(+). It participates in glycan biosynthesis; glycogen biosynthesis. Synthesizes alpha-1,4-glucan chains using ADP-glucose. This Chlamydia muridarum (strain MoPn / Nigg) protein is Glycogen synthase.